A 326-amino-acid polypeptide reads, in one-letter code: DNA-directed RNA polymerase subunit alpha (326 aa).

The tract at residues 1–231 (MQTALLKPKI…DQLSVFAALE (231 aa)) is alpha N-terminal domain (alpha-NTD). The segment at 247 to 326 (IDPILLRPVD…ENWPPAGLEK (80 aa)) is alpha C-terminal domain (alpha-CTD).

This sequence belongs to the RNA polymerase alpha chain family. In terms of assembly, homodimer. The RNAP catalytic core consists of 2 alpha, 1 beta, 1 beta' and 1 omega subunit. When a sigma factor is associated with the core the holoenzyme is formed, which can initiate transcription.

It carries out the reaction RNA(n) + a ribonucleoside 5'-triphosphate = RNA(n+1) + diphosphate. Its function is as follows. DNA-dependent RNA polymerase catalyzes the transcription of DNA into RNA using the four ribonucleoside triphosphates as substrates. The chain is DNA-directed RNA polymerase subunit alpha from Ralstonia nicotianae (strain ATCC BAA-1114 / GMI1000) (Ralstonia solanacearum).